We begin with the raw amino-acid sequence, 406 residues long: UPF0754 membrane protein CYA_0973 (406 aa).

The next 2 membrane-spanning stretches (helical) occupy residues M1–N21 and I385–L405.

This sequence belongs to the UPF0754 family.

The protein resides in the cell inner membrane. The chain is UPF0754 membrane protein CYA_0973 from Synechococcus sp. (strain JA-3-3Ab) (Cyanobacteria bacterium Yellowstone A-Prime).